We begin with the raw amino-acid sequence, 177 residues long: Large ribosomal subunit protein uL6 (177 aa).

Belongs to the universal ribosomal protein uL6 family. As to quaternary structure, part of the 50S ribosomal subunit.

In terms of biological role, this protein binds to the 23S rRNA, and is important in its secondary structure. It is located near the subunit interface in the base of the L7/L12 stalk, and near the tRNA binding site of the peptidyltransferase center. The polypeptide is Large ribosomal subunit protein uL6 (Aeromonas hydrophila subsp. hydrophila (strain ATCC 7966 / DSM 30187 / BCRC 13018 / CCUG 14551 / JCM 1027 / KCTC 2358 / NCIMB 9240 / NCTC 8049)).